We begin with the raw amino-acid sequence, 206 residues long: Recombination protein RecR (206 aa).

The C4-type zinc-finger motif lies at 58 to 73 (CENCHNISDVAVCEIC). In terms of domain architecture, Toprim spans 81-176 (QIVCVVEDVR…ITSSIARGIS (96 aa)).

Belongs to the RecR family.

Its function is as follows. May play a role in DNA repair. It seems to be involved in an RecBC-independent recombinational process of DNA repair. It may act with RecF and RecO. This chain is Recombination protein RecR, found in Flavobacterium psychrophilum (strain ATCC 49511 / DSM 21280 / CIP 103535 / JIP02/86).